Reading from the N-terminus, the 306-residue chain is Glutaminase (306 aa).

Residues S64, N115, E159, N166, Y190, Y242, and V260 each coordinate substrate.

Belongs to the glutaminase family. Homotetramer.

It catalyses the reaction L-glutamine + H2O = L-glutamate + NH4(+). The sequence is that of Glutaminase from Aeromonas salmonicida (strain A449).